A 424-amino-acid polypeptide reads, in one-letter code: Nuclear hormone receptor family member nhr-55 (424 aa).

The span at 1-19 (MNSPSSSSSFCSSSSSPSS) shows a compositional bias: low complexity. The tract at residues 1–20 (MNSPSSSSSFCSSSSSPSSL) is disordered. Residues 25-100 (PDTCQVCGQK…VGMTIENFQF (76 aa)) constitute a DNA-binding region (nuclear receptor). NR C4-type zinc fingers lie at residues 28–55 (CQVC…FRRC) and 64–88 (CRRN…LKKC). Residues 169-424 (EVPLHTPNAL…FSHPEVFIDL (256 aa)) form the NR LBD domain.

The protein belongs to the nuclear hormone receptor family.

It localises to the nucleus. Orphan nuclear receptor. This chain is Nuclear hormone receptor family member nhr-55 (nhr-55), found in Caenorhabditis elegans.